The chain runs to 327 residues: L-lactate dehydrogenase (327 aa).

Residues Val-18, Asp-39, Lys-44, Tyr-69, and 83-84 (GA) each bind NAD(+). Substrate contacts are provided by residues Gln-86, Arg-92, and 124–127 (NPVD). Residues 122-124 (AAN) and Ser-147 each bind NAD(+). Position 152 to 155 (152 to 155 (DSAR)) interacts with substrate. Beta-D-fructose 1,6-bisphosphate contacts are provided by Arg-157 and His-172. The active-site Proton acceptor is the His-179. Residue Tyr-224 is modified to Phosphotyrosine. Thr-233 is a substrate binding site.

This sequence belongs to the LDH/MDH superfamily. LDH family. Homotetramer.

It localises to the cytoplasm. It carries out the reaction (S)-lactate + NAD(+) = pyruvate + NADH + H(+). The protein operates within fermentation; pyruvate fermentation to lactate; (S)-lactate from pyruvate: step 1/1. With respect to regulation, allosterically activated by fructose 1,6-bisphosphate (FBP). Functionally, catalyzes the conversion of lactate to pyruvate. The protein is L-lactate dehydrogenase of Streptococcus uberis (strain ATCC BAA-854 / 0140J).